Reading from the N-terminus, the 541-residue chain is ATP synthase subunit alpha (541 aa).

173 to 180 is a binding site for ATP; that stretch reads GDRQTGKT. Residues 517–527 are compositionally biased toward basic and acidic residues; it reads GIEPGVEEHES. Residues 517–541 form a disordered region; that stretch reads GIEPGVEEHESLGATAVNQETIVKK. Over residues 532-541 the composition is skewed to polar residues; sequence AVNQETIVKK.

This sequence belongs to the ATPase alpha/beta chains family. F-type ATPases have 2 components, CF(1) - the catalytic core - and CF(0) - the membrane proton channel. CF(1) has five subunits: alpha(3), beta(3), gamma(1), delta(1), epsilon(1). CF(0) has three main subunits: a(1), b(2) and c(9-12). The alpha and beta chains form an alternating ring which encloses part of the gamma chain. CF(1) is attached to CF(0) by a central stalk formed by the gamma and epsilon chains, while a peripheral stalk is formed by the delta and b chains.

It is found in the cell membrane. The enzyme catalyses ATP + H2O + 4 H(+)(in) = ADP + phosphate + 5 H(+)(out). In terms of biological role, produces ATP from ADP in the presence of a proton gradient across the membrane. The alpha chain is a regulatory subunit. The chain is ATP synthase subunit alpha from Kocuria rhizophila (strain ATCC 9341 / DSM 348 / NBRC 103217 / DC2201).